The sequence spans 349 residues: Ribosomal RNA small subunit methyltransferase C (349 aa).

Belongs to the methyltransferase superfamily. RsmC family. In terms of assembly, monomer.

It localises to the cytoplasm. The catalysed reaction is guanosine(1207) in 16S rRNA + S-adenosyl-L-methionine = N(2)-methylguanosine(1207) in 16S rRNA + S-adenosyl-L-homocysteine + H(+). In terms of biological role, specifically methylates the guanine in position 1207 of 16S rRNA in the 30S particle. The polypeptide is Ribosomal RNA small subunit methyltransferase C (Psychromonas ingrahamii (strain DSM 17664 / CCUG 51855 / 37)).